We begin with the raw amino-acid sequence, 335 residues long: Glycerol-3-phosphate dehydrogenase [NAD(P)+] (335 aa).

Residues Ser12, Trp13, and Lys107 each contribute to the NADPH site. Residues Lys107, Gly138, and Ser140 each coordinate sn-glycerol 3-phosphate. Ala142 is an NADPH binding site. Residues Lys193, Asp246, Ser256, Arg257, and Asn258 each contribute to the sn-glycerol 3-phosphate site. Lys193 functions as the Proton acceptor in the catalytic mechanism. Arg257 provides a ligand contact to NADPH. NADPH contacts are provided by Val281 and Glu283.

It belongs to the NAD-dependent glycerol-3-phosphate dehydrogenase family.

The protein localises to the cytoplasm. It carries out the reaction sn-glycerol 3-phosphate + NAD(+) = dihydroxyacetone phosphate + NADH + H(+). It catalyses the reaction sn-glycerol 3-phosphate + NADP(+) = dihydroxyacetone phosphate + NADPH + H(+). It participates in membrane lipid metabolism; glycerophospholipid metabolism. Catalyzes the reduction of the glycolytic intermediate dihydroxyacetone phosphate (DHAP) to sn-glycerol 3-phosphate (G3P), the key precursor for phospholipid synthesis. The chain is Glycerol-3-phosphate dehydrogenase [NAD(P)+] from Citrifermentans bemidjiense (strain ATCC BAA-1014 / DSM 16622 / JCM 12645 / Bem) (Geobacter bemidjiensis).